An 81-amino-acid chain; its full sequence is Translational regulator CsrA (81 aa).

This sequence belongs to the CsrA/RsmA family. In terms of assembly, homodimer; the beta-strands of each monomer intercalate to form a hydrophobic core, while the alpha-helices form wings that extend away from the core.

Its subcellular location is the cytoplasm. In terms of biological role, a translational regulator that binds mRNA to regulate translation initiation and/or mRNA stability. Usually binds in the 5'-UTR at or near the Shine-Dalgarno sequence preventing ribosome-binding, thus repressing translation. Its main target seems to be the major flagellin gene, while its function is anatagonized by FliW. This chain is Translational regulator CsrA, found in Desulforapulum autotrophicum (strain ATCC 43914 / DSM 3382 / VKM B-1955 / HRM2) (Desulfobacterium autotrophicum).